The sequence spans 251 residues: Ribosomal RNA small subunit methyltransferase G (251 aa).

S-adenosyl-L-methionine-binding positions include G74, F79, 125–126 (AE), and R144. The disordered stretch occupies residues 224–251 (RPAGLPTQHPLGAIEGAPRVESEEPEEP).

This sequence belongs to the methyltransferase superfamily. RNA methyltransferase RsmG family.

It localises to the cytoplasm. In terms of biological role, specifically methylates the N7 position of a guanine in 16S rRNA. The chain is Ribosomal RNA small subunit methyltransferase G from Gloeobacter violaceus (strain ATCC 29082 / PCC 7421).